Here is a 550-residue protein sequence, read N- to C-terminus: Methionine--tRNA ligase (550 aa).

The 'HIGH' region motif lies at 10–22 (LPYPNNSSPHLGN). The 'KMSKS' region motif lies at 336–340 (KFSKS). Position 339 (K339) interacts with ATP.

This sequence belongs to the class-I aminoacyl-tRNA synthetase family.

It catalyses the reaction tRNA(Met) + L-methionine + ATP = L-methionyl-tRNA(Met) + AMP + diphosphate. The protein is Methionine--tRNA ligase (MARS) of Acanthamoeba polyphaga mimivirus (APMV).